The following is a 197-amino-acid chain: Large ribosomal subunit protein uL11 (197 aa).

This sequence belongs to the universal ribosomal protein uL11 family. As to quaternary structure, part of the ribosomal stalk of the 50S ribosomal subunit. Interacts with L10 and the large rRNA to form the base of the stalk. L10 forms an elongated spine to which L12 dimers bind in a sequential fashion forming a multimeric L10(L12)X complex. One or more lysine residues are methylated.

Its function is as follows. Forms part of the ribosomal stalk which helps the ribosome interact with GTP-bound translation factors. The polypeptide is Large ribosomal subunit protein uL11 (Mycoplasma mobile (strain ATCC 43663 / 163K / NCTC 11711) (Mesomycoplasma mobile)).